The chain runs to 143 residues: Large ribosomal subunit protein uL11 (143 aa).

This sequence belongs to the universal ribosomal protein uL11 family. As to quaternary structure, part of the ribosomal stalk of the 50S ribosomal subunit. Interacts with L10 and the large rRNA to form the base of the stalk. L10 forms an elongated spine to which L12 dimers bind in a sequential fashion forming a multimeric L10(L12)X complex. Post-translationally, one or more lysine residues are methylated.

Its function is as follows. Forms part of the ribosomal stalk which helps the ribosome interact with GTP-bound translation factors. This Allorhizobium ampelinum (strain ATCC BAA-846 / DSM 112012 / S4) (Agrobacterium vitis (strain S4)) protein is Large ribosomal subunit protein uL11.